The chain runs to 591 residues: MDDHNLDYKGSGALEELEMLTVNAKEAQELILTKILERNQATEYLSKFMNGSTNISAFKRHVPVVTYDKVHPYILRIATGEESSILCGEYILELLRSSGTSRGEPRLMPSILKDLDRRTYLYSLIMPIMNKYISGLGEGKAMYLLFVKAETLTDSGIPVRSVLTSYYKSPHFLHRKHDLYNNYTSPDEVILCPDSQQSMYCQLLCGLVERQHVLRIGAVFASAFLRSISFLEQHWRDLVNDIRIGQLNSSITSPACRLAMLNFLALPNPELADQVEAICSCGSWKGILGRLWPNVKYIEAVLTGTMAQYIPMLEFYGGGAIPFVCTMYASSESYFGVNLSPLCSPADVSYTILPNMAYFEFIPLEDGLRLTDHEEVIENDKLVSLVDVKVGCYYELVVTTFSGLYRYRVGDVLQVTGFYNRAPQFKFICRRNVILSIDSDKTNEEDLHNSVTTAKKILENQNYLLLEYTSYTDISTVPGHYVLFWEIKSTHDERPAPLDAQLLESCCAAVEESLDYVYRRCRAHDRSIGPLEIRLVEAGAFDALMDLLVSHGSSINQYKTPRCIESSLALKLLNSKVIACFFSPQDPECGM.

The protein belongs to the IAA-amido conjugating enzyme family. As to expression, expressed in etiolated and green seedlings, roots, callus and highly in flowers.

May catalyze the synthesis of indole-3-acetic acid (IAA)-amino acid conjugates, providing a mechanism for the plant to cope with the presence of excess auxin. The sequence is that of Probable indole-3-acetic acid-amido synthetase GH3.11 (GH3.11) from Oryza sativa subsp. japonica (Rice).